We begin with the raw amino-acid sequence, 133 residues long: Interleukin-4 (133 aa).

Residues 1 to 24 (MGLTSQLIPMLVCLLACTSNFVHG) form the signal peptide. 3 cysteine pairs are disulfide-bonded: C27–C133, C48–C85, and C70–C105. N-linked (GlcNAc...) asparagine glycans are attached at residues N62, N96, and N102.

The protein belongs to the IL-4/IL-13 family.

It is found in the secreted. Functionally, participates in at least several B-cell activation processes as well as of other cell types. It is a costimulator of DNA-synthesis. It induces the expression of class II MHC molecules on resting B-cells. It enhances both secretion and cell surface expression of IgE and IgG1. It also regulates the expression of the low affinity Fc receptor for IgE (CD23) on both lymphocytes and monocytes. Positively regulates IL31RA expression in macrophages. Stimulates autophagy in dendritic cells by interfering with mTORC1 signaling and through the induction of RUFY4. The protein is Interleukin-4 (IL4) of Tursiops truncatus (Atlantic bottle-nosed dolphin).